Reading from the N-terminus, the 228-residue chain is Cytidylate kinase (228 aa).

12–20 serves as a coordination point for ATP; it reads GPSGSGKGT.

This sequence belongs to the cytidylate kinase family. Type 1 subfamily.

It is found in the cytoplasm. The enzyme catalyses CMP + ATP = CDP + ADP. The catalysed reaction is dCMP + ATP = dCDP + ADP. In Pseudomonas putida (strain W619), this protein is Cytidylate kinase.